We begin with the raw amino-acid sequence, 252 residues long: Protein BTG3 (252 aa).

Residues 138 to 162 form a disordered region; that stretch reads VTSDYHSGSSSSDEETSKEMEVKPS.

It belongs to the BTG family. As to expression, ubiquitous. High expression in the ventricular zone of the developing central nervous system. High in ovary, testis, prostate, thymus and lung.

In terms of biological role, overexpression impairs serum-induced cell cycle progression from the G0/G1 to S phase. The chain is Protein BTG3 (BTG3) from Homo sapiens (Human).